The following is a 237-amino-acid chain: Keratin-associated protein 5-5 (237 aa).

8 repeat units span residues 62–65, 68–71, 74–77, 159–162, 178–181, 188–191, 198–201, and 227–230. The interval 62 to 230 is 8 X 4 AA repeats of C-C-X-P; that stretch reads CCVPVCCCKP…CCCQSSCCVP (169 aa).

The protein belongs to the KRTAP type 5 family. Interacts with hair keratins. Restricted to hair root, not detected in any other tissues.

Its function is as follows. In the hair cortex, hair keratin intermediate filaments are embedded in an interfilamentous matrix, consisting of hair keratin-associated protein (KRTAP), which are essential for the formation of a rigid and resistant hair shaft through their extensive disulfide bond cross-linking with abundant cysteine residues of hair keratins. The matrix proteins include the high-sulfur and high-glycine-tyrosine keratins. This Homo sapiens (Human) protein is Keratin-associated protein 5-5 (KRTAP5-5).